Here is a 279-residue protein sequence, read N- to C-terminus: HTH-type transcriptional regulator HdfR (279 aa).

The HTH lysR-type domain maps to 1-58; the sequence is MDTELLKTFLEVSRTRHFGRAAESLYLTQSAVSFRIRQLENQLGVNLFTRHRNNIRLT. The H-T-H motif DNA-binding region spans 18–37; that stretch reads FGRAAESLYLTQSAVSFRIR.

The protein belongs to the LysR transcriptional regulatory family.

Negatively regulates the transcription of the flagellar master operon flhDC by binding to the upstream region of the operon. This is HTH-type transcriptional regulator HdfR from Escherichia coli (strain ATCC 8739 / DSM 1576 / NBRC 3972 / NCIMB 8545 / WDCM 00012 / Crooks).